Reading from the N-terminus, the 180-residue chain is Nudix hydrolase 16, mitochondrial (180 aa).

One can recognise a Nudix hydrolase domain in the interval 18-162; the sequence is GSRLVAGCIP…WMKDALVEGF (145 aa). Phe-60 serves as a coordination point for substrate. Residues Gly-63, Glu-78, Glu-82, and Glu-144 each contribute to the Mn(2+) site. The short motif at 63 to 84 is the Nudix box element; that stretch reads GGWENDETVREAAAREAVEEAG.

The protein belongs to the Nudix hydrolase family. It depends on Mg(2+) as a cofactor. Mn(2+) serves as cofactor. In terms of tissue distribution, expressed in roots, leaves, stems and inflorescences.

The protein localises to the mitochondrion. Functionally, probably mediates the hydrolysis of some nucleoside diphosphate derivatives. The sequence is that of Nudix hydrolase 16, mitochondrial (NUDT16) from Arabidopsis thaliana (Mouse-ear cress).